The primary structure comprises 168 residues: Photosystem I assembly protein Ycf3 (168 aa).

TPR repeat units lie at residues 35 to 68 (AFTYYRDGMSAQSEGNYAEALQNYYEAMRLEIDP), 72 to 105 (SYILYNIGLIHTSNGEHTKALEYYFRALERNPFL), and 120 to 153 (GEQAIRQGDSEIAEAWFDQAAEYWKQAIALTPGN).

Belongs to the Ycf3 family.

The protein resides in the plastid. The protein localises to the chloroplast thylakoid membrane. Essential for the assembly of the photosystem I (PSI) complex. May act as a chaperone-like factor to guide the assembly of the PSI subunits. In Lactuca sativa (Garden lettuce), this protein is Photosystem I assembly protein Ycf3.